Here is a 335-residue protein sequence, read N- to C-terminus: Twinfilin (335 aa).

ADF-H domains lie at 4-140 (SSGI…QHKL) and 176-316 (GISF…NELH). The tract at residues 307–335 (SEESIINELHPPKVEEKKAFSKPSRPGRK) is disordered. A compositionally biased stretch (basic and acidic residues) spans 316 to 325 (HPPKVEEKKA).

The protein belongs to the actin-binding proteins ADF family. Twinfilin subfamily. Interacts with G-actin; ADP-actin form.

The protein resides in the cytoplasm. It is found in the cytoskeleton. The protein localises to the cell cortex. In terms of biological role, actin-binding protein involved in motile and morphological processes. Inhibits actin polymerization, likely by sequestering G-actin. The sequence is that of Twinfilin (twfA) from Dictyostelium discoideum (Social amoeba).